Consider the following 540-residue polypeptide: V-set and immunoglobulin domain-containing protein 10 (540 aa).

The N-terminal stretch at 1–30 is a signal peptide; sequence MAAGGSAPEPRVLVCLGALLAGWVAVGLEA. 4 Ig-like C2-type domains span residues 31 to 119, 123 to 215, 223 to 309, and 311 to 404; these read VVIG…WLQV, PYQI…RKVT, PPPS…VQIR, and PSLL…IWLS. Topologically, residues 31 to 413 are extracellular; it reads VVIGEVHENV…SVKEPLNIGG (383 aa). N-linked (GlcNAc...) asparagine glycosylation is found at Asn39, Asn46, Asn70, Asn108, Asn138, Asn171, Asn180, and Asn198. Residues Cys44 and Cys103 are joined by a disulfide bond. Intrachain disulfides connect Cys153-Cys201 and Cys245-Cys290. An N-linked (GlcNAc...) asparagine glycan is attached at Asn326. Residues Cys331 and Cys388 are joined by a disulfide bond. The helical transmembrane segment at 414 to 434 threads the bilayer; it reads IVGTIVSLLLLGLAIISGLLL. The Cytoplasmic portion of the chain corresponds to 435–540; it reads HYSPVFCWKV…DIVQEEDRPV (106 aa). Over residues 461-477 the composition is skewed to acidic residues; it reads DSEEEEEEEEEEEEDAA. Disordered regions lie at residues 461–500 and 513–540; these read DSEE…QDHI and QMGN…DRPV. Residues 482 to 500 show a composition bias toward basic and acidic residues; the sequence is EGAREREELPKEIPKQDHI. Residues 521–534 show a composition bias toward acidic residues; sequence LQDDSSEEQSDIVQ.

It is found in the membrane. The sequence is that of V-set and immunoglobulin domain-containing protein 10 (VSIG10) from Homo sapiens (Human).